We begin with the raw amino-acid sequence, 267 residues long: Type III pantothenate kinase (267 aa).

Residue 6–13 (DSGNSRLK) coordinates ATP. Substrate contacts are provided by residues Tyr96 and 103-106 (GADR). The active-site Proton acceptor is Asp105. Thr131 contributes to the ATP binding site. A substrate-binding site is contributed by Thr181.

The protein belongs to the type III pantothenate kinase family. Homodimer. NH4(+) is required as a cofactor. Requires K(+) as cofactor.

The protein localises to the cytoplasm. It carries out the reaction (R)-pantothenate + ATP = (R)-4'-phosphopantothenate + ADP + H(+). The protein operates within cofactor biosynthesis; coenzyme A biosynthesis; CoA from (R)-pantothenate: step 1/5. Catalyzes the phosphorylation of pantothenate (Pan), the first step in CoA biosynthesis. The sequence is that of Type III pantothenate kinase from Bordetella bronchiseptica (strain ATCC BAA-588 / NCTC 13252 / RB50) (Alcaligenes bronchisepticus).